Reading from the N-terminus, the 330-residue chain is Putative aminopeptidase (330 aa).

The a divalent metal cation site is built by His65 and Asp168. The Proton acceptor role is filled by Glu198. Positions 199, 221, and 307 each coordinate a divalent metal cation.

It belongs to the peptidase M42 family. The cofactor is a divalent metal cation.

The chain is Putative aminopeptidase (celM) from Acetivibrio thermocellus (Hungateiclostridium thermocellum).